Here is a 56-residue protein sequence, read N- to C-terminus: Large ribosomal subunit protein uL30 (56 aa).

This sequence belongs to the universal ribosomal protein uL30 family. As to quaternary structure, part of the 50S ribosomal subunit.

This is Large ribosomal subunit protein uL30 from Nitratidesulfovibrio vulgaris (strain DSM 19637 / Miyazaki F) (Desulfovibrio vulgaris).